Here is a 487-residue protein sequence, read N- to C-terminus: uncharacterized protein (487 aa).

The next 3 membrane-spanning stretches (helical) occupy residues 10–30 (AALMGALAVVLITAAPVAADA), 45–65 (VISPVAIPCVALGKFADAVAA), and 439–459 (APVVFAGAALACTAIGADFTL).

Its subcellular location is the cell membrane. This is an uncharacterized protein from Mycobacterium tuberculosis (strain CDC 1551 / Oshkosh).